The chain runs to 448 residues: Phosphoglucosamine mutase (448 aa).

The active-site Phosphoserine intermediate is Ser-100. The Mg(2+) site is built by Ser-100, Asp-240, Asp-242, and Asp-244. The residue at position 100 (Ser-100) is a Phosphoserine.

Belongs to the phosphohexose mutase family. The cofactor is Mg(2+). Activated by phosphorylation.

It carries out the reaction alpha-D-glucosamine 1-phosphate = D-glucosamine 6-phosphate. Catalyzes the conversion of glucosamine-6-phosphate to glucosamine-1-phosphate. This Bacillus velezensis (strain DSM 23117 / BGSC 10A6 / LMG 26770 / FZB42) (Bacillus amyloliquefaciens subsp. plantarum) protein is Phosphoglucosamine mutase.